An 81-amino-acid chain; its full sequence is ATP synthase subunit C, plastid (81 aa).

Transmembrane regions (helical) follow at residues 3-23 and 57-77; these read PIISAASVIAAGFAVGLASIG and LAFMEALTIYGLVVALALLFA.

It belongs to the ATPase C chain family. In terms of assembly, F-type ATPases have 2 components, F(1) - the catalytic core - and F(0) - the membrane proton channel. F(1) has five subunits: alpha(3), beta(3), gamma(1), delta(1), epsilon(1). F(0) has four main subunits: a(1), b(1), b'(1) and c(10-14). The alpha and beta chains form an alternating ring which encloses part of the gamma chain. F(1) is attached to F(0) by a central stalk formed by the gamma and epsilon chains, while a peripheral stalk is formed by the delta, b and b' chains.

The protein localises to the plastid membrane. Functionally, f(1)F(0) ATP synthase produces ATP from ADP in the presence of a proton or sodium gradient. F-type ATPases consist of two structural domains, F(1) containing the extramembraneous catalytic core and F(0) containing the membrane proton channel, linked together by a central stalk and a peripheral stalk. During catalysis, ATP synthesis in the catalytic domain of F(1) is coupled via a rotary mechanism of the central stalk subunits to proton translocation. Key component of the F(0) channel; it plays a direct role in translocation across the membrane. A homomeric c-ring of between 10-14 subunits forms the central stalk rotor element with the F(1) delta and epsilon subunits. This is ATP synthase subunit C, plastid from Cuscuta gronovii (Common dodder).